The sequence spans 626 residues: tRNA uridine 5-carboxymethylaminomethyl modification enzyme MnmG (626 aa).

13 to 18 provides a ligand contact to FAD; the sequence is GGGHAG. 273 to 287 provides a ligand contact to NAD(+); that stretch reads GPRYCPSIEDKIHRF.

This sequence belongs to the MnmG family. In terms of assembly, homodimer. Heterotetramer of two MnmE and two MnmG subunits. FAD is required as a cofactor.

The protein resides in the cytoplasm. Its function is as follows. NAD-binding protein involved in the addition of a carboxymethylaminomethyl (cmnm) group at the wobble position (U34) of certain tRNAs, forming tRNA-cmnm(5)s(2)U34. The chain is tRNA uridine 5-carboxymethylaminomethyl modification enzyme MnmG from Acinetobacter baumannii (strain AB307-0294).